The chain runs to 288 residues: Protease HtpX (288 aa).

The next 2 membrane-spanning stretches (helical) occupy residues 4–24 (ILLFLATNFAVLFVFNIILTL) and 33–53 (VGLLIFATLFGFTGSIISLLM). Residue His-139 coordinates Zn(2+). Residue Glu-140 is part of the active site. His-143 contacts Zn(2+). 2 helical membrane passes run 146–166 (SGDMVTMTLLQGVLNTFVIFI) and 186–206 (IYFMISMVLELVFGVLASMIA). Glu-214 contributes to the Zn(2+) binding site.

It belongs to the peptidase M48B family. Requires Zn(2+) as cofactor.

The protein localises to the cell inner membrane. This Histophilus somni (strain 2336) (Haemophilus somnus) protein is Protease HtpX.